The chain runs to 596 residues: Aspartate--tRNA(Asp/Asn) ligase (596 aa).

Position 169 (Glu169) interacts with L-aspartate. The interval 193-196 (QLFK) is aspartate. Arg215 serves as a coordination point for L-aspartate. ATP contacts are provided by residues 215-217 (RDE) and Gln224. An L-aspartate-binding site is contributed by His447. Glu481 is an ATP binding site. Arg488 contacts L-aspartate. Position 533-536 (533-536 (GWDR)) interacts with ATP. The tract at residues 559–596 (GYDPLTQAPAPITAQQRKEAGVDFKPEAKKADPGATKA) is disordered. Positions 574–590 (QRKEAGVDFKPEAKKAD) are enriched in basic and acidic residues.

This sequence belongs to the class-II aminoacyl-tRNA synthetase family. Type 1 subfamily. Homodimer.

The protein resides in the cytoplasm. The enzyme catalyses tRNA(Asx) + L-aspartate + ATP = L-aspartyl-tRNA(Asx) + AMP + diphosphate. In terms of biological role, aspartyl-tRNA synthetase with relaxed tRNA specificity since it is able to aspartylate not only its cognate tRNA(Asp) but also tRNA(Asn). Reaction proceeds in two steps: L-aspartate is first activated by ATP to form Asp-AMP and then transferred to the acceptor end of tRNA(Asp/Asn). In Arthrobacter sp. (strain FB24), this protein is Aspartate--tRNA(Asp/Asn) ligase.